A 286-amino-acid chain; its full sequence is Probable ketoamine kinase YniA (286 aa).

91–93 serves as a coordination point for ATP; that stretch reads DYL. Asp193 functions as the Proton acceptor in the catalytic mechanism.

Belongs to the fructosamine kinase family.

Its function is as follows. Ketoamine kinase that phosphorylates ketoamines on the third carbon of the sugar moiety to generate ketoamine 3-phosphate. This is Probable ketoamine kinase YniA (yniA) from Escherichia coli O157:H7.